A 196-amino-acid chain; its full sequence is MVKIGVLGLQGAVREHVKAIEASGAEAVVVKQVEQLQEIDGLILPGGESTTMRRLIDKYHFMEPLREFARSRKPMFGTCAGMILLANKLIGYEEAHIGAMDITVERNAFGRQKDSFEATLSIKGVGEDFTGVFIRAPYVVDIADDVEVLSMHNGRMVAVKQGPFLAASFHPELTDDYRVTAYFVEMVEEAKMKKVV.

Residue 47–49 (GES) coordinates L-glutamine. The active-site Nucleophile is cysteine 79. L-glutamine contacts are provided by residues arginine 106 and 134-135 (IR). Active-site charge relay system residues include histidine 170 and glutamate 172.

Belongs to the glutaminase PdxT/SNO family. As to quaternary structure, in the presence of PdxS, forms a dodecamer of heterodimers. Only shows activity in the heterodimer.

The enzyme catalyses aldehydo-D-ribose 5-phosphate + D-glyceraldehyde 3-phosphate + L-glutamine = pyridoxal 5'-phosphate + L-glutamate + phosphate + 3 H2O + H(+). It catalyses the reaction L-glutamine + H2O = L-glutamate + NH4(+). It functions in the pathway cofactor biosynthesis; pyridoxal 5'-phosphate biosynthesis. In terms of biological role, catalyzes the hydrolysis of glutamine to glutamate and ammonia as part of the biosynthesis of pyridoxal 5'-phosphate. The resulting ammonia molecule is channeled to the active site of PdxS. The sequence is that of Pyridoxal 5'-phosphate synthase subunit PdxT from Bacillus cytotoxicus (strain DSM 22905 / CIP 110041 / 391-98 / NVH 391-98).